Consider the following 1057-residue polypeptide: Collagen alpha-1(I) chain (1057 aa).

Gln-1 is modified (pyrrolidone carboxylic acid). The span at Gln-1–Ser-10 shows a compositional bias: basic and acidic residues. Positions Gln-1–Pro-17 are nonhelical region (N-terminal). Residues Gln-1 to Ala-1057 form a disordered region. Lys-9 carries the allysine modification. A Phosphoserine modification is found at Ser-10. 4 Collagen-like domains span residues Gly-18–Lys-76, Gly-75–Asn-134, Gly-135–Glu-193, and Gly-195–Gly-252. Residues Gly-18 to Pro-1031 are triple-helical region. Residues Pro-29, Pro-32, Pro-35, Pro-44, Pro-47, Pro-50, Pro-65, Pro-80, Pro-86, Pro-95, and Pro-101 each carry the 4-hydroxyproline modification. A compositionally biased stretch (low complexity) spans Pro-37–Met-56. A compositionally biased stretch (basic and acidic residues) spans Asn-68 to Glu-82. Lys-104 carries the post-translational modification 5-hydroxylysine; alternate. Lys-104 is a glycosylation site (O-linked (Gal...) hydroxylysine; alternate). The residue at position 110 (Ser-110) is a Phosphoserine. Positions Asp-118 to Asn-134 are enriched in low complexity. Residues Pro-128, Pro-131, Pro-137, Pro-146, and Pro-152 each carry the 4-hydroxyproline modification. A compositionally biased stretch (low complexity) spans Pro-157–Ala-170. The span at Pro-172–Phe-184 shows a compositional bias: pro residues. 4-hydroxyproline occurs at positions 173, 182, 185, 212, 215, 227, 233, 242, 248, 251, and 266. Positions Ala-218–Lys-269 are enriched in low complexity. 5-hydroxylysine is present on Lys-269. 4-hydroxyproline is present on residues Pro-275, Pro-278, Pro-290, Pro-292, Pro-299, Pro-314, Pro-320, Pro-323, Pro-329, and Pro-335. The span at Lys-287–Gln-296 shows a compositional bias: low complexity. A compositionally biased stretch (gly residues) spans Gly-324–Gly-333. 5-hydroxylysine is present on Lys-344. Pro-353, Pro-362, Pro-368, Pro-374, Pro-383, Pro-386, Pro-395, Pro-404, Pro-410, Pro-422, Pro-431, Pro-440, Pro-443, Pro-461, Pro-479, Pro-485, Pro-491, Pro-497, Pro-503, Pro-509, Pro-521, Pro-530, Pro-542, Pro-554, Pro-557, Pro-563, Pro-569, and Pro-578 each carry 4-hydroxyproline. Residues Lys-377–Arg-403 show a composition bias toward low complexity. The segment covering Ala-412–Pro-431 has biased composition (low complexity). Low complexity predominate over residues Gln-473 to Gln-500. Collagen-like domains follow at residues Gly-522 to Gly-579 and Gly-555 to Pro-613. Over residues Asn-539–Gln-566 the composition is skewed to low complexity. 5-hydroxylysine is present on Lys-590. 4-hydroxyproline is present on residues Pro-596, Pro-611, and Pro-617. 2 consecutive Collagen-like domains span residues Gly-618–Asp-676 and Gly-678–Pro-736. The span at Ala-623–Ala-637 shows a compositional bias: low complexity. Position 626 is a phosphoserine (Ser-626). A 4-hydroxyproline mark is found at Pro-638, Pro-644, Pro-647, Pro-656, Pro-662, Pro-680, Pro-689, and Pro-698. Low complexity predominate over residues Ala-650–Ala-677. Lys-701 is subject to 5-hydroxylysine. Residues Ser-706 to Val-722 show a composition bias toward low complexity. A 4-hydroxyproline mark is found at Pro-710 and Pro-716. Residue Pro-724 is modified to 3-hydroxyproline. 4-hydroxyproline is present on residues Pro-725, Pro-734, Pro-737, Pro-758, Pro-764, Pro-767, Pro-776, and Pro-785. The segment covering Glu-751–Glu-760 has biased composition (low complexity). Residues Ala-770 to Pro-785 show a composition bias toward low complexity. The segment covering Gly-789 to Gly-798 has biased composition (gly residues). Pro-803, Pro-812, Pro-815, Pro-821, Pro-836, Pro-842, Pro-848, Pro-857, Pro-863, and Pro-869 each carry 4-hydroxyproline. In terms of domain architecture, Collagen-like 9 spans Gly-804–Gly-861. A compositionally biased stretch (pro residues) spans Pro-835 to Ala-845. Lys-872 is modified (5-hydroxylysine). Residues Ser-881–Val-896 are compositionally biased toward pro residues. 4-hydroxyproline is present on residues Pro-884, Pro-887, and Pro-890. Residues Ala-917–Pro-931 show a composition bias toward low complexity. 2 consecutive Collagen-like domains span residues Gly-918–Pro-976 and Gly-972–Pro-1030. Basic and acidic residues predominate over residues Arg-932 to Leu-946. At Lys-935 the chain carries 5-hydroxylysine. Residue Lys-947 is modified to 5-hydroxylysine; alternate. Lys-947 carries O-linked (Gal...) hydroxylysine; alternate glycosylation. 4-hydroxyproline occurs at positions 959, 962, 965, 983, 998, and 1001. Residues Pro-965–Leu-997 show a composition bias toward low complexity. At Pro-1003 the chain carries 3-hydroxyproline. The residue at position 1004 (Pro-1004) is a 4-hydroxyproline. The segment covering Val-1016 to Pro-1031 has biased composition (pro residues). Pro-1018 carries the post-translational modification 3-hydroxyproline. Pro-1019 carries the 4-hydroxyproline modification. The residue at position 1021 (Pro-1021) is a 3-hydroxyproline. Pro-1022 is subject to 4-hydroxyproline. A 3-hydroxyproline modification is found at Pro-1024. A 4-hydroxyproline mark is found at Pro-1025, Pro-1028, and Pro-1031. A nonhelical region (C-terminal) region spans residues Ser-1032–Tyr-1055. Residues Glu-1046 to Ala-1057 show a composition bias toward basic and acidic residues. Residue Lys-1047 is modified to Allysine.

The protein belongs to the fibrillar collagen family. Trimers of one alpha 2(I) and two alpha 1(I) chains. In terms of processing, contains mostly 4-hydroxyproline. Proline residues at the third position of the tripeptide repeating unit (G-X-Y) are hydroxylated in some or all of the chains. Contains 3-hydroxyproline at a few sites. This modification occurs on the first proline residue in the sequence motif Gly-Pro-Hyp, where Hyp is 4-hydroxyproline. Post-translationally, lysine residues at the third position of the tripeptide repeating unit (G-X-Y) are 5-hydroxylated in some or all of the chains. In terms of processing, O-glycosylated on hydroxylated lysine residues. The O-linked glycan consists of a Glc-Gal disaccharide.

It is found in the secreted. The protein resides in the extracellular space. It localises to the extracellular matrix. Type I collagen is a member of group I collagen (fibrillar forming collagen). This Mammut americanum (American mastodon) protein is Collagen alpha-1(I) chain (COL1A1).